Here is a 596-residue protein sequence, read N- to C-terminus: Mitoguardin 2 (596 aa).

2 helical membrane passes run 11 to 31 (IMQALAMTVAEIPVFLYSTFG) and 40 to 60 (LSPSLKKVLFATALGSVALAL). Disordered stretches follow at residues 67–158 (RRGR…AAWE) and 576–596 (ALPKSPCQAESGNLDASGQQD). A compositionally biased stretch (polar residues) spans 110-123 (MSPSTRSNDTLSGV). The segment covering 124-140 (SSIAQSKHSSSSHSIAS) has biased composition (low complexity). 2 stretches are compositionally biased toward polar residues: residues 143 to 152 (VPSSPNQSVN) and 583 to 596 (QAESGNLDASGQQD).

Belongs to the mitoguardin family. In terms of assembly, homodimer and heterodimer; forms heterodimers with miga1.

The protein localises to the mitochondrion outer membrane. Its function is as follows. Regulator of mitochondrial fusion: acts by forming homo- and heterodimers at the mitochondrial outer membrane and facilitating the formation of pld6/MitoPLD dimers. May act by regulating phospholipid metabolism via pld6/MitoPLD. The chain is Mitoguardin 2 from Danio rerio (Zebrafish).